Consider the following 271-residue polypeptide: 2-dehydro-3-deoxyphosphooctonate aldolase (271 aa).

The protein belongs to the KdsA family.

It localises to the cytoplasm. It carries out the reaction D-arabinose 5-phosphate + phosphoenolpyruvate + H2O = 3-deoxy-alpha-D-manno-2-octulosonate-8-phosphate + phosphate. The protein operates within carbohydrate biosynthesis; 3-deoxy-D-manno-octulosonate biosynthesis; 3-deoxy-D-manno-octulosonate from D-ribulose 5-phosphate: step 2/3. It functions in the pathway bacterial outer membrane biogenesis; lipopolysaccharide biosynthesis. The protein is 2-dehydro-3-deoxyphosphooctonate aldolase of Campylobacter jejuni subsp. jejuni serotype O:2 (strain ATCC 700819 / NCTC 11168).